A 318-amino-acid chain; its full sequence is Ornithine carbamoyltransferase (318 aa).

Carbamoyl phosphate-binding positions include 63–66, Gln90, Arg114, and 141–144; these read STRT and HPCQ. L-ornithine contacts are provided by residues Asn172, Asp235, and 239–240; that span reads SM. Carbamoyl phosphate contacts are provided by residues 275-276 and Arg303; that span reads CL.

It belongs to the aspartate/ornithine carbamoyltransferase superfamily. OTCase family.

The protein localises to the cytoplasm. The enzyme catalyses carbamoyl phosphate + L-ornithine = L-citrulline + phosphate + H(+). It functions in the pathway amino-acid biosynthesis; L-arginine biosynthesis; L-arginine from L-ornithine and carbamoyl phosphate: step 1/3. Reversibly catalyzes the transfer of the carbamoyl group from carbamoyl phosphate (CP) to the N(epsilon) atom of ornithine (ORN) to produce L-citrulline. In Parasynechococcus marenigrum (strain WH8102), this protein is Ornithine carbamoyltransferase.